Consider the following 449-residue polypeptide: Probable phosphoglucosamine mutase (449 aa).

Ser101 acts as the Phosphoserine intermediate in catalysis. Positions 101, 239, 241, and 243 each coordinate Mg(2+). A Phosphoserine modification is found at Ser101.

Belongs to the phosphohexose mutase family. It depends on Mg(2+) as a cofactor. Post-translationally, activated by phosphorylation.

The catalysed reaction is alpha-D-glucosamine 1-phosphate = D-glucosamine 6-phosphate. Its function is as follows. Catalyzes the conversion of glucosamine-6-phosphate to glucosamine-1-phosphate. This is Probable phosphoglucosamine mutase from Methanothermobacter thermautotrophicus (strain ATCC 29096 / DSM 1053 / JCM 10044 / NBRC 100330 / Delta H) (Methanobacterium thermoautotrophicum).